The primary structure comprises 351 residues: Phosphoribosylformylglycinamidine cyclo-ligase (351 aa).

This sequence belongs to the AIR synthase family.

It localises to the cytoplasm. The catalysed reaction is 2-formamido-N(1)-(5-O-phospho-beta-D-ribosyl)acetamidine + ATP = 5-amino-1-(5-phospho-beta-D-ribosyl)imidazole + ADP + phosphate + H(+). It participates in purine metabolism; IMP biosynthesis via de novo pathway; 5-amino-1-(5-phospho-D-ribosyl)imidazole from N(2)-formyl-N(1)-(5-phospho-D-ribosyl)glycinamide: step 2/2. The chain is Phosphoribosylformylglycinamidine cyclo-ligase from Azotobacter vinelandii (strain DJ / ATCC BAA-1303).